The primary structure comprises 560 residues: Tudor and KH domain-containing protein (560 aa).

2 consecutive KH domains span residues 52–115 (DIEI…KAAI) and 124–190 (PVFE…KHLI). Glycyl lysine isopeptide (Lys-Gly) (interchain with G-Cter in ubiquitin) cross-links involve residues lysine 65, lysine 76, lysine 110, lysine 112, lysine 152, lysine 175, lysine 181, lysine 187, and lysine 193. A disordered region spans residues 211-230 (RVPRKQPISVRREEVTEPGG). Glycyl lysine isopeptide (Lys-Gly) (interchain with G-Cter in ubiquitin) cross-links involve residues lysine 256 and lysine 267. Residues 268 to 291 (EGSWEKPNDDSFQNSGAQSSPETS) form a disordered region. The span at 277–290 (DSFQNSGAQSSPET) shows a compositional bias: polar residues. Position 278 is a phosphoserine (serine 278). A Tudor domain is found at 353–412 (TVHVGDIVAAPLSTNGSWYRARVLGTLENGNLDLYFVDFGDNGDCALKDLRALRSDFLSL). Glycyl lysine isopeptide (Lys-Gly) (interchain with G-Cter in ubiquitin) cross-links involve residues lysine 479, lysine 510, and lysine 529.

The protein belongs to the Tdrkh family. In terms of assembly, interacts with (symmetrically methylated) PIWIL1, PIWIL2 and PIWIL4. Post-translationally, ubiquitinated by PRKN during mitophagy, leading to its degradation and enhancement of mitophagy. Deubiquitinated by USP30. In terms of tissue distribution, highly expressed in testis, present at lower level in brain. Weakly or not expressed in other tissues (at protein level).

It localises to the cytoplasm. It is found in the mitochondrion. Functionally, participates in the primary piRNA biogenesis pathway and is required during spermatogenesis to repress transposable elements and prevent their mobilization, which is essential for the germline integrity. The piRNA metabolic process mediates the repression of transposable elements during meiosis by forming complexes composed of piRNAs and Piwi proteins and govern the methylation and subsequent repression of transposons. Required for the final steps of primary piRNA biogenesis by participating in the processing of 31-37 nt intermediates into mature piRNAs. May act in pi-bodies and piP-bodies by transferring piRNA precursors or intermediates to or between these granules. The polypeptide is Tudor and KH domain-containing protein (Tdrkh) (Mus musculus (Mouse)).